Here is a 156-residue protein sequence, read N- to C-terminus: Cyanate hydratase (156 aa).

Residues Arg-96, Glu-99, and Ser-122 contribute to the active site.

The protein belongs to the cyanase family.

It carries out the reaction cyanate + hydrogencarbonate + 3 H(+) = NH4(+) + 2 CO2. In terms of biological role, catalyzes the reaction of cyanate with bicarbonate to produce ammonia and carbon dioxide. The polypeptide is Cyanate hydratase (Escherichia coli (strain K12 / DH10B)).